The primary structure comprises 1046 residues: UDP-N-acetylglucosamine--peptide N-acetylglucosaminyltransferase 110 kDa subunit (1046 aa).

Ala-2 carries the post-translational modification N-acetylalanine. Residues Ser-3 and Ser-4 each carry the phosphoserine; by GSK3-beta; alternate modification. Ser-3 and Ser-4 each carry an O-linked (GlcNAc) serine; alternate glycan. Residue Ser-20 is modified to Phosphoserine. TPR repeat units follow at residues 21–54 (FQGLAELAHREYQAGDFEAAERHCMQLWRQEPDN), 89–122 (AEAYSNLGNVYKERGQLQEAIEHYRHALRLKPDF), 123–156 (IDGYINLAAALVAAGDMEGAVQAYVSALQYNPDL), 157–190 (YCVRSDLGNLLKALGRLEEAKACYLKAIETQPNF), 191–224 (AVAWSNLGCVFNAQGEIWLAIHHFEKAVTLDPNF), 225–258 (LDAYINLGNVLKEARIFDRAVAAYLRALSLSPNH), 259–292 (AVVHGNLACVYYEQGLIDLAIDTYRRAIELQPHF), 293–326 (PDAYCNLANALKEKGSVAEAEDCYNTALRLCPTH), 327–360 (ADSLNNLANIKREQGNIEEAVRLYRKALEVFPEF), 361–394 (AAAHSNLASVLQQQGKLQEALMHYKEAIRISPTF), 395–428 (ADAYSNMGNTLKEMQDVQGALQCYTRAIQINPAF), and 429–462 (ADAHSNLASIHKDSGNIPEAIASYRTALKLKPDF). Ser-399 carries an O-linked (GlcNAc) serine; by autocatalysis glycan. At Thr-454 the chain carries Phosphothreonine. The TPR 13; truncated repeat unit spans residues 463–473 (PDAYCNLAHCL). The DFP motif motif lies at 464–466 (DAY). The Nuclear localization signal motif lies at 487 to 503 (KKLVSIVADQLEKNRLP). The active-site Proton acceptor is His-508. Residues Gln-849, Lys-852, 906–908 (APK), 911–914 (HVRR), 930–932 (HTT), and Asp-935 each bind UDP. Position 989 is a phosphotyrosine (Tyr-989). Positions 991 to 1010 (KKIRGKVWKQRISSPLFNTK) are required for phosphatidylinositol 3,4,5-triphosphate binding.

This sequence belongs to the glycosyltransferase 41 family. O-GlcNAc transferase subfamily. Monomer; may exist in different oligomerization states in cells. Homotrimer, oligomerizes via TPR repeats 6 and 7. Trimerization is not necessary for activity in vitro, however it increases affinity for UDP-GlcNAc. Component of a THAP1/THAP3-HCFC1-OGT complex. Component of the NSL complex at least composed of MOF/KAT8, KANSL1, KANSL2, KANSL3, MCRS1, PHF20, OGT1/OGT, WDR5 and HCFC1. Found in a complex with KIF5B, RHOT1, RHOT2 and TRAK1. Found in a complex composed of at least SINHCAF, SIN3A, HDAC1, SAP30, RBBP4, OGT and TET1. Component of a complex composed of KMT2E/MLL5, OGT and USP7; the complex stabilizes KMT2E/MLL5, preventing KMT2E/MLL5 ubiquitination and proteasomal-mediated degradation. Interacts (via TPRs 1-6) with SIN3A; the interaction mediates transcriptional repression in parallel with histone deacetylase. Interacts (via TPR 5-6) with TET1, TET2 and TET3. Interacts (via TPR repeats 6 and 7) with ATXN10. Interacts with NSD2. Interacts with PROSER1; this interaction mediates TET2 O-GlcNAcylation and stability by promoting the interaction between OGT and TET2. Ubiquitinated by the SCF(FBXO31) complex, leading to its proteasomal degradation. Post-translationally, phosphorylation on Ser-3 or Ser-4 by GSK3-beta positively regulates its activity. Phosphorylation at Thr-454 by AMPK promotes nuclear localization. In terms of processing, glycosylated via autocatalysis; O-GlcNAcylation at Ser-399 promotes nuclear localization.

It is found in the nucleus. The protein localises to the cytoplasm. It carries out the reaction L-seryl-[protein] + UDP-N-acetyl-alpha-D-glucosamine = 3-O-(N-acetyl-beta-D-glucosaminyl)-L-seryl-[protein] + UDP + H(+). The enzyme catalyses L-threonyl-[protein] + UDP-N-acetyl-alpha-D-glucosamine = 3-O-(N-acetyl-beta-D-glucosaminyl)-L-threonyl-[protein] + UDP + H(+). The protein operates within protein modification; protein glycosylation. Its activity is regulated as follows. Subject to product inhibition by UDP. In terms of biological role, catalyzes the transfer of a single N-acetylglucosamine from UDP-GlcNAc to a serine or threonine residue in cytoplasmic and nuclear proteins resulting in their modification with a beta-linked N-acetylglucosamine (O-GlcNAc). Glycosylates a large and diverse number of proteins including histone H2B, AKT1, AMPK, ATG4B, CAPRIN1, EZH2, FNIP1, GSDMD, KRT7, LMNA, LMNB1, LMNB2, RPTOR, HOXA1, PFKL, KMT2E/MLL5, MAPT/TAU, TET2, RBL2, RET, NOD2 and HCFC1. Can regulate their cellular processes via cross-talk between glycosylation and phosphorylation or by affecting proteolytic processing. Involved in insulin resistance in muscle and adipocyte cells via glycosylating insulin signaling components and inhibiting the 'Thr-308' phosphorylation of AKT1, enhancing IRS1 phosphorylation and attenuating insulin signaling. Involved in glycolysis regulation by mediating glycosylation of 6-phosphofructokinase PFKL, inhibiting its activity. Plays a key role in chromatin structure by mediating O-GlcNAcylation of 'Ser-112' of histone H2B: recruited to CpG-rich transcription start sites of active genes via its interaction with TET proteins (TET1, TET2 or TET3). As part of the NSL complex indirectly involved in acetylation of nucleosomal histone H4 on several lysine residues. O-GlcNAcylation of 'Ser-75' of EZH2 increases its stability, and facilitating the formation of H3K27me3 by the PRC2/EED-EZH2 complex. Stabilizes KMT2E/MLL5 by mediating its glycosylation, thereby preventing KMT2E/MLL5 ubiquitination. Regulates circadian oscillation of the clock genes and glucose homeostasis in the liver. Stabilizes clock proteins BMAL1 and CLOCK through O-glycosylation, which prevents their ubiquitination and subsequent degradation. Promotes the CLOCK-BMAL1-mediated transcription of genes in the negative loop of the circadian clock such as PER1/2 and CRY1/2. O-glycosylates HCFC1 and regulates its proteolytic processing and transcriptional activity. Component of a THAP1/THAP3-HCFC1-OGT complex that is required for the regulation of the transcriptional activity of RRM1. Regulates mitochondrial motility in neurons by mediating glycosylation of TRAK1. Promotes autophagy by mediating O-glycosylation of ATG4B. Acts as a regulator of mTORC1 signaling by mediating O-glycosylation of RPTOR and FNIP1: O-GlcNAcylation of RPTOR in response to glucose sufficiency promotes activation of the mTORC1 complex. The polypeptide is UDP-N-acetylglucosamine--peptide N-acetylglucosaminyltransferase 110 kDa subunit (OGT) (Sus scrofa (Pig)).